A 516-amino-acid polypeptide reads, in one-letter code: Squalene epoxidase 5 (516 aa).

A run of 2 helical transmembrane segments spans residues Phe-3 to Val-23 and Ala-45 to Ala-65. FAD contacts are provided by residues Val-55–Gly-56, Glu-75–Arg-76, Arg-83, Phe-88, Arg-156, Val-172, Asp-335, and Met-348. A helical membrane pass occupies residues Leu-446–Pro-466.

This sequence belongs to the squalene monooxygenase family. Requires FAD as cofactor. As to expression, expressed in seedlings, leaves, stems and inflorescences. Detected in siliques.

It is found in the membrane. The catalysed reaction is squalene + reduced [NADPH--hemoprotein reductase] + O2 = (S)-2,3-epoxysqualene + oxidized [NADPH--hemoprotein reductase] + H2O + H(+). The protein operates within terpene metabolism; lanosterol biosynthesis; lanosterol from farnesyl diphosphate: step 2/3. In terms of biological role, catalyzes the stereospecific oxidation of squalene to (S)-2,3-epoxysqualene, and is considered to be a rate-limiting enzyme in steroid biosynthesis. This chain is Squalene epoxidase 5 (SQE5), found in Arabidopsis thaliana (Mouse-ear cress).